Consider the following 306-residue polypeptide: MQNQIDMVKDEAEVAASISAIKGEEWGNCSSVEDQPSFQEEEAAKVPYVGDKEPLSSLAAEYQSGSPILLEKIKILDSQYIGIRRTRGDGNCFFRSFMFSYLEHILESQDRAEVDRIKVNVEKCRKTLQNLGYTDFTFEDFFALFLEQLDDILQGTEESISYDELVNRSRDQSVSDYIVMFFRFVTAGDIRTRADFFEPFITGLSNATVDQFCKSSVEPMGEESDHIHITALSDALGVAIRVVYLDRSSCDSGGVTVNHHDFVPVGITNEKDEEASAPFITLLYRPGHYDILYPKPSCKVSDNVGK.

One can recognise an OTU domain in the interval 81–295 (IGIRRTRGDG…PGHYDILYPK (215 aa)). Residue D89 is part of the active site. Catalysis depends on C92, which acts as the Nucleophile. Residues H259 and H288 contribute to the active site.

The protein belongs to the peptidase C65 family.

The enzyme catalyses Thiol-dependent hydrolysis of ester, thioester, amide, peptide and isopeptide bonds formed by the C-terminal Gly of ubiquitin (a 76-residue protein attached to proteins as an intracellular targeting signal).. With respect to regulation, cleavage activities for 'Lys-48'- and 'Lys-63'-linked ubiquitin (UB) tetramers is inhibited by UB aldehyde and N-ethylmaleimide but not by the metalloprotease inhibitors 1,10-phenanthroline and EDTA, and the serine protease inhibitor phenylmethylsulfonyl fluoride. In terms of biological role, hydrolase that can remove conjugated ubiquitin from proteins in vitro and may therefore play an important regulatory role at the level of protein turnover by preventing degradation. Cysteine protease with a preference for Met-1 and 'Lys-48' over 'Lys-63'-linked ubiquitin (UB) tetramers (e.g. Ub2, Ub3 and Ub4) as substrates. This chain is OVARIAN TUMOR DOMAIN-containing deubiquitinating enzyme 1, found in Arabidopsis thaliana (Mouse-ear cress).